The primary structure comprises 64 residues: Large ribosomal subunit protein bL35 (64 aa).

Residues 1–27 (MPKMKTKSGAKKRFKPTASGFKHKHAF) form a disordered region.

This sequence belongs to the bacterial ribosomal protein bL35 family.

In Azotobacter vinelandii (strain DJ / ATCC BAA-1303), this protein is Large ribosomal subunit protein bL35.